A 208-amino-acid chain; its full sequence is Protein GrpE (208 aa).

A compositionally biased stretch (basic and acidic residues) spans 1-12 (MTNKDESVKKNT). A disordered region spans residues 1–51 (MTNKDESVKKNTESTVEETNVKQNIDDSVEQAEESKGHLQDEAIEETSDEN). Residues 13–23 (ESTVEETNVKQ) show a composition bias toward polar residues. Residues 42 to 51 (EAIEETSDEN) are compositionally biased toward acidic residues.

The protein belongs to the GrpE family. In terms of assembly, homodimer.

Its subcellular location is the cytoplasm. In terms of biological role, participates actively in the response to hyperosmotic and heat shock by preventing the aggregation of stress-denatured proteins, in association with DnaK and GrpE. It is the nucleotide exchange factor for DnaK and may function as a thermosensor. Unfolded proteins bind initially to DnaJ; upon interaction with the DnaJ-bound protein, DnaK hydrolyzes its bound ATP, resulting in the formation of a stable complex. GrpE releases ADP from DnaK; ATP binding to DnaK triggers the release of the substrate protein, thus completing the reaction cycle. Several rounds of ATP-dependent interactions between DnaJ, DnaK and GrpE are required for fully efficient folding. The sequence is that of Protein GrpE from Staphylococcus aureus (strain COL).